The chain runs to 462 residues: Calcitonin gene-related peptide type 1 receptor (462 aa).

The first 22 residues, 1–22, serve as a signal peptide directing secretion; it reads MEKKYILYFLFLLPFFMILVIA. At 23-140 the chain is on the extracellular side; sequence ETEEENPDDL…NTHEKVQTAL (118 aa). Cystine bridges form between Cys-49–Cys-75, Cys-66–Cys-106, and Cys-89–Cys-128. 3 N-linked (GlcNAc...) asparagine glycosylation sites follow: Asn-67, Asn-119, and Asn-124. The chain crosses the membrane as a helical span at residues 141–165; sequence NLFYLTIIGHGLSIASLLISLGIFF. The Cytoplasmic portion of the chain corresponds to 166-176; it reads YFKSLSCQRIT. Residues 177 to 199 traverse the membrane as a helical segment; sequence LHKNLFFSFVCNSIVTIIHLTAV. The Extracellular portion of the chain corresponds to 200 to 210; the sequence is ANNQALVATNP. Residues 211-239 traverse the membrane as a helical segment; sequence VSCKVFQFIHLYLMGCNYFWMLCEGIYLH. At 240 to 253 the chain is on the cytoplasmic side; the sequence is TLIVVAVFAEKQHL. Residues 254–274 form a helical membrane-spanning segment; the sequence is MWYYFLGWGFPLIPACIHAVA. The Extracellular segment spans residues 275–290; the sequence is RRLYYNDNCWISSDTH. The segment at 289 to 290 is required for RAMP3 interaction; sequence TH. A helical transmembrane segment spans residues 291 to 315; sequence LLYIIHGPICAALLVNLFFLLNIVR. Residues 316-330 are Cytoplasmic-facing; the sequence is VLITKLKVTHQAESN. Residues 331 to 352 form a helical membrane-spanning segment; the sequence is LYMKAVRATLILVPLLGIEFVL. Residues 353–367 are Extracellular-facing; it reads IPWRPEGKIAEEVYD. The chain crosses the membrane as a helical span at residues 368–388; sequence YIMHILVHYQGLLVSTIYCFF. Residues 389–462 lie on the Cytoplasmic side of the membrane; that stretch reads NGEVQAILRR…IVIKPEKLYD (74 aa). 2 positions are modified to phosphoserine: Ser-421 and Ser-446.

The protein belongs to the G-protein coupled receptor 2 family. In terms of assembly, heterodimer of CALCRL and RAMP1; the receptor complex functions as CGRP receptor. Heterodimer of CALCRL and RAMP2 or CALCRL and RAMP3; the complexes function as adrenomedullin receptor. Detected in lung and coronary artery.

The protein localises to the cell membrane. In terms of biological role, g protein-coupled receptor which specificity is determined by its interaction with receptor-activity-modifying proteins (RAMPs). Together with RAMP1, form the receptor complex for calcitonin-gene-related peptides CALCA/CGRP1 and CALCB/CGRP2. Together with RAMP2 or RAMP3, function as receptor complexes for adrenomedullin (ADM and ADM2). Ligand binding causes a conformation change that triggers signaling via guanine nucleotide-binding proteins (G proteins) and modulates the activity of downstream effectors. Activates cAMP-dependent pathway. This is Calcitonin gene-related peptide type 1 receptor (CALCRL) from Sus scrofa (Pig).